Here is a 699-residue protein sequence, read N- to C-terminus: TBC1 domain family member 23 (699 aa).

Positions 44-225 (PLPADLRAKV…AIWDGYLQQA (182 aa)) constitute a Rab-GAP TBC domain. Phosphoserine is present on Ser-300. In terms of domain architecture, Rhodanese spans 334–446 (EGVRFFVVDC…LQQHLADINV (113 aa)). Residues 459-479 (STSGSRSSINSVDGESPNGSS) show a composition bias toward polar residues. Residues 459 to 483 (STSGSRSSINSVDGESPNGSSDRGM) form a disordered region. Residues Ser-469, Ser-474, and Ser-507 each carry the phosphoserine modification. Position 514 is a phosphothreonine (Thr-514). A may mediate the interaction with C17orf75, FAM91A1 and WDR11 region spans residues 514–573 (TPVDRMSFNLPWPDRSCTERHVSSSDRVGKPYRGVKPVFSIGDEEEYDTDEIDSSSMSDD). Residues 514–699 (TPVDRMSFNL…IMKVLDALES (186 aa)) form a may mediate the interaction with WASHC1 region. A phosphoserine mark is found at Ser-520 and Ser-571. Residues 574-699 (DRKEVVNIQT…IMKVLDALES (126 aa)) form a may mediate the interaction with FKBP15 and WASHC2; required for endosome to Golgi trafficking region.

In terms of assembly, directly interacts with GOLGA1 and GOLGA4. Interacts with FAM91A1, C17ORF75 and WDR11; the interaction recruits TBC1D23 to AP-1-derived vesicles. Directly interacts with WASHC1 and WASHC2A/FAM21A. Interacts with FKBP15. In terms of tissue distribution, isoform 1: Widely expressed, including in fetal adult brain (corpus callosum, pons, cerebellum), spinal cord, heart, skeletal muscle, thymus and bone marrow, and at lower levels in spleen. Hardly detected in liver, kidney, colon and testis. Isoform 2: Expressed at high levels in liver, kidney, colon and testis. Hardly detected in tissues expressing high levels of isoform 1. Expressed at low levels in spleen.

It localises to the golgi apparatus. It is found in the trans-Golgi network. Its subcellular location is the cytoplasmic vesicle. Functionally, putative Rab GTPase-activating protein which plays a role in vesicular trafficking. Involved in endosome-to-Golgi trafficking. Acts as a bridging protein by binding simultaneously to golgins, including GOLGA1 and GOLGA4, located at the trans-Golgi, and to the WASH complex, located on endosome-derived vesicles. Together with WDR11 complex facilitates the golgin-mediated capture of vesicles generated using AP-1. Plays a role in brain development, including in cortical neuron positioning. May also be important for neurite outgrowth, possibly through its involvement in membrane trafficking and cargo delivery, 2 processes that are essential for axonal and dendritic growth. May act as a general inhibitor of innate immunity signaling, strongly inhibiting multiple TLR and dectin/CLEC7A-signaling pathways. Does not alter initial activation events, but instead affects maintenance of inflammatory gene expression several hours after bacterial lipopolysaccharide (LPS) challenge. The chain is TBC1 domain family member 23 (TBC1D23) from Homo sapiens (Human).